The sequence spans 700 residues: Putative glutamine-dependent NAD(+) synthetase (700 aa).

In terms of domain architecture, CN hydrolase spans Val-5–Val-275. Catalysis depends on Glu-45, which acts as the Proton acceptor; for glutaminase activity. Residue Lys-114 is the For glutaminase activity of the active site. The active-site Nucleophile; for glutaminase activity is the Cys-175. Positions Ile-327 to Lys-700 are ligase. Pro-357–Ser-364 lines the ATP pocket. The active site involves Ser-359.

It in the C-terminal section; belongs to the NAD synthetase family.

It catalyses the reaction deamido-NAD(+) + L-glutamine + ATP + H2O = L-glutamate + AMP + diphosphate + NAD(+) + H(+). It participates in cofactor biosynthesis; NAD(+) biosynthesis; NAD(+) from deamido-NAD(+) (L-Gln route): step 1/1. The protein is Putative glutamine-dependent NAD(+) synthetase of Schizosaccharomyces pombe (strain 972 / ATCC 24843) (Fission yeast).